The primary structure comprises 626 residues: Trehalase (626 aa).

The next 2 helical transmembrane spans lie at 20 to 40 and 45 to 65; these read KLFLSSSPFNLLFSFPSFIYL and SLFFFFFFFLCFSFTTSMLDS. Alpha,alpha-trehalose-binding residues include R224, D232, N268, R277, Q279, R344, and E346. Residues D380 and E580 each act as proton donor/acceptor in the active site. The alpha,alpha-trehalose site is built by E580 and E595.

This sequence belongs to the glycosyl hydrolase 37 family. Forms homodimers. In terms of tissue distribution, highly expressed in flowers. Expressed at low levels in leaves and stems. Expressed in guard cells.

It is found in the cell membrane. Its subcellular location is the cytoplasm. The protein resides in the nucleus. It catalyses the reaction alpha,alpha-trehalose + H2O = alpha-D-glucose + beta-D-glucose. In terms of biological role, involved in the regulation of trehalose content by hydrolyzing trehalose to glucose. May play a role in the regulation of abscisic acid-induced stomatal closure in response to drought stress. This is Trehalase (TRE1) from Arabidopsis thaliana (Mouse-ear cress).